We begin with the raw amino-acid sequence, 151 residues long: UPF0208 membrane protein PC1_2779 (151 aa).

2 helical membrane-spanning segments follow: residues Phe46–Gly66 and Leu69–Trp89.

It belongs to the UPF0208 family.

The protein localises to the cell inner membrane. This chain is UPF0208 membrane protein PC1_2779, found in Pectobacterium carotovorum subsp. carotovorum (strain PC1).